A 460-amino-acid chain; its full sequence is Chromosomal replication initiator protein DnaA (460 aa).

A domain I, interacts with DnaA modulators region spans residues 1–84 (MAVSLWQQCI…RFDIGSRPSA (84 aa)). Residues 84–123 (AKKPEPAPVAAVRVPNPQTKASVGTSFNTTEPVVNANHRS) form a domain II region. The interval 124–340 (NINPTYQFDN…GALNRVIANA (217 aa)) is domain III, AAA+ region. 4 residues coordinate ATP: G168, G170, K171, and T172. The tract at residues 341-460 (NFTGRPITID…YANLIRTLSS (120 aa)) is domain IV, binds dsDNA.

This sequence belongs to the DnaA family. In terms of assembly, oligomerizes as a right-handed, spiral filament on DNA at oriC.

It is found in the cytoplasm. Functionally, plays an essential role in the initiation and regulation of chromosomal replication. ATP-DnaA binds to the origin of replication (oriC) to initiate formation of the DNA replication initiation complex once per cell cycle. Binds the DnaA box (a 9 base pair repeat at the origin) and separates the double-stranded (ds)DNA. Forms a right-handed helical filament on oriC DNA; dsDNA binds to the exterior of the filament while single-stranded (ss)DNA is stabiized in the filament's interior. The ATP-DnaA-oriC complex binds and stabilizes one strand of the AT-rich DNA unwinding element (DUE), permitting loading of DNA polymerase. After initiation quickly degrades to an ADP-DnaA complex that is not apt for DNA replication. Binds acidic phospholipids. The chain is Chromosomal replication initiator protein DnaA from Shewanella sp. (strain MR-7).